The chain runs to 533 residues: Lymphocyte cytosolic protein 2 (533 aa).

In terms of domain architecture, SAM spans 15–81 (WDPDSLADYF…INKNEERRSI (67 aa)). The residue at position 23 (tyrosine 23) is a Phosphotyrosine. The interval 78–417 (RRSIFTRKPQ…PPSPAEEENS (340 aa)) is disordered. A compositionally biased stretch (acidic residues) spans 108-155 (FEEDDYESPNDDQDGEDDGDYESPNEEEEAPVEDDADYEPPPSNDEEA). The segment covering 184-213 (QQPPVPPQRPMAALPPPPAGRNHSPLPPPQ) has biased composition (pro residues). Serine 207 carries the phosphoserine modification. Composition is skewed to polar residues over residues 337–350 (MSSN…TKPS) and 365–376 (SESNSSFPQSAS). Residues serine 376 and serine 410 each carry the phosphoserine modification. A compositionally biased stretch (pro residues) spans 400–411 (LPLPNKPRPPSP). One can recognise an SH2 domain in the interval 422–530 (WYVSYITRPE…RYQCTLTHAA (109 aa)).

Interacts with SLA. Interacts with CBLB. Interacts with GRB2. Interacts with SHB. Interacts with PRAM1. Interacts (via SH2 domain) with CD6 (via tyrosine phosphorylated C-terminus). Interacts with FYB1 and the phosphorylated form of FYB2. Interacts with 14-3-3 adapter/YWHAZ; this phosphorylation leads to YWHAZ proteolytic degradation. Interacts with VAV1; this interaction plays a role in TCR-mediated cytokine production. Interacts with AGER; this interaction plays an important role in AGER-mediated pro-inflammatory responses and cytokine release. Phosphorylated after T-cell receptor activation by ZAP70, ITK and TXK, which leads to the up-regulation of Th1 preferred cytokine IL-2. SYK-dependent phosphorylation is required for recruitment of PI3K signaling components. Highly expressed in spleen, thymus and peripheral blood leukocytes. Highly expressed also in T-cell and monocytic cell lines, expressed at lower level in B-cell lines. Not detected in fibroblast or neuroblastoma cell lines.

It is found in the cytoplasm. Its function is as follows. Adapter protein primarily involved in signaling pathways within T-cells, as well as other immune cells such as platelets, mast cells, and natural killer (NK) cells. Plays a crucial role for transducing signal from the T-cell receptor (TCR) after antigen recognition leading to T-cell activation. Mechanistically, once phosphorylated by the kinase ZAP70, mediates interactions with the guanine-nucleotide exchange factor VAV1, the adapter protein NCK and the kinase ITK. In turn, stimulates the activation of PKC-theta/PRKCQ and NF-kappa-B transcriptional activity in response to CD3 and CD28 costimulation. Also plays an essential role in AGER-induced signaling pathways including p38 MAPK and ERK1/2 activation leading to cytokine release and pro-inflammatory responses. The sequence is that of Lymphocyte cytosolic protein 2 (LCP2) from Homo sapiens (Human).